A 455-amino-acid chain; its full sequence is Beta-1,4-mannosyltransferase bre-3 (455 aa).

This sequence belongs to the glycosyltransferase 2 family.

The protein localises to the cytoplasm. It participates in protein modification; protein glycosylation. Its function is as follows. Glycosyltransferase with a proposed role in glycosphingolipid biosynthesis. Involved in susceptibility to pore-forming crystal toxins in conjunction with bre-1, bre-2 and bre-4. Involved in resistance to the nematotoxic C.cinerea galectin Cgl2. Has a role in determining brood size. This chain is Beta-1,4-mannosyltransferase bre-3, found in Caenorhabditis briggsae.